We begin with the raw amino-acid sequence, 809 residues long: Bifunctional enzyme MurC/Ddl (809 aa).

The segment at 1–450 (MKGTPQYHFI…GEALKDFNPK (450 aa)) is UDP-N-acetylmuramate--alanine ligase. ATP-binding positions include 111–117 (GSHGKTG) and 606–661 (IETF…SREI). A D-alanine--D-alanine ligase region spans residues 451–809 (KLSIGLVCGG…FTKEQDLVKR (359 aa)). Residues 573 to 784 (KRIASAVGVP…QEQIVDHFII (212 aa)) form the ATP-grasp domain. Asp738, Glu751, and Asn753 together coordinate Mg(2+).

It in the N-terminal section; belongs to the MurCDEF family. The protein in the C-terminal section; belongs to the D-alanine--D-alanine ligase family. Mg(2+) is required as a cofactor. Requires Mn(2+) as cofactor.

It is found in the cytoplasm. The enzyme catalyses UDP-N-acetyl-alpha-D-muramate + L-alanine + ATP = UDP-N-acetyl-alpha-D-muramoyl-L-alanine + ADP + phosphate + H(+). It carries out the reaction 2 D-alanine + ATP = D-alanyl-D-alanine + ADP + phosphate + H(+). It participates in cell wall biogenesis; peptidoglycan biosynthesis. Its function is as follows. Cell wall formation. The sequence is that of Bifunctional enzyme MurC/Ddl (murC/ddl) from Chlamydia pneumoniae (Chlamydophila pneumoniae).